The sequence spans 156 residues: uncharacterized protein (156 aa).

Belongs to the mimivirus L223/L227/L812 family.

This is an uncharacterized protein from Acanthamoeba polyphaga mimivirus (APMV).